We begin with the raw amino-acid sequence, 302 residues long: Sulfate adenylyltransferase subunit 2 (302 aa).

Positions 280-302 (RQGRAIDHDQSGSMELKKRQGYF) are disordered.

The protein belongs to the PAPS reductase family. CysD subfamily. As to quaternary structure, heterodimer composed of CysD, the smaller subunit, and CysN.

It catalyses the reaction sulfate + ATP + H(+) = adenosine 5'-phosphosulfate + diphosphate. It participates in sulfur metabolism; hydrogen sulfide biosynthesis; sulfite from sulfate: step 1/3. Its function is as follows. With CysN forms the ATP sulfurylase (ATPS) that catalyzes the adenylation of sulfate producing adenosine 5'-phosphosulfate (APS) and diphosphate, the first enzymatic step in sulfur assimilation pathway. APS synthesis involves the formation of a high-energy phosphoric-sulfuric acid anhydride bond driven by GTP hydrolysis by CysN coupled to ATP hydrolysis by CysD. The polypeptide is Sulfate adenylyltransferase subunit 2 (Vibrio cholerae serotype O1 (strain ATCC 39315 / El Tor Inaba N16961)).